The chain runs to 95 residues: RING finger protein Z (95 aa).

Positions Met-1 to Leu-17 are enriched in polar residues. The segment at Met-1–Glu-25 is disordered. A lipid anchor (N-myristoyl glycine; by host) is attached at Gly-2. Residues Cys-40 to Cys-76 form an RING-type; atypical zinc finger. The ASAP motif signature appears at Ala-90–Pro-93.

Belongs to the arenaviridae Z protein family. Interacts with protein NP; this interaction probably directs the encapsidated genome to budding sites. Interacts (via RING domain) with polymerase L; this interaction inhibits viral transcription and replication, Z partially blocks the product exit tunnel for the releasing nascent RNA product. Interacts with the glycoprotein complex; this interaction plays a role in virion budding. Interacts with host eIF4E; this interaction results in eIF4E reduced affinity for its substrate, the 5'-m7 G cap structure. Interacts (via late-budding domain) with host TSG101; this interaction is essential for budding and release of viral particles. Interacts with host RPLP0; this interaction may serve to load ribosome-like particles inside the virion. Interacts with host PML; this interaction induces PML bodies redistribution in the cytoplasm upon viral infection. In terms of processing, myristoylation is required for the role of RING finger protein Z in assembly and budding.

The protein localises to the virion. Its subcellular location is the host cytoplasm. It is found in the host perinuclear region. The protein resides in the host cell membrane. In terms of biological role, plays a crucial role in virion assembly and budding. Expressed late in the virus life cycle, it acts as an inhibitor of viral transcription and RNA synthesis by interacting with the viral polymerase L. Presumably recruits the NP encapsidated genome to cellular membranes at budding sites via direct interaction with NP. Plays critical roles in the final steps of viral release by interacting with host TSG101, a member of the vacuolar protein-sorting pathway and using other cellular host proteins involved in vesicle formation pathway. The budding of the virus progeny occurs after association of protein Z with the viral glycoprotein complex SSP-GP1-GP2 at the cell periphery, step that requires myristoylation of protein Z. Also selectively represses protein production by associating with host eIF4E. In cell-based minigenome assay, has an inhibitory effect on the ribonucleoprotein machinery (vRNP), which is responsible for the replication and transcription of the viral genome. This Tacaribe virus (strain Franze-Fernandez) (TCRV) protein is RING finger protein Z.